The chain runs to 309 residues: Fe-S cluster assembly protein dre2 (309 aa).

The tract at residues 1 to 132 is N-terminal SAM-like domain; the sequence is MTTTIVLASP…LRRPAQVEAV (132 aa). Residues 133–195 are linker; the sequence is PLKLSTKKSA…DALVSDEETQ (63 aa). [2Fe-2S] cluster contacts are provided by Cys-207, Cys-216, Cys-219, and Cys-221. The tract at residues 207–221 is fe-S binding site A; the sequence is CSKPGKKKRCKNCTC. The [4Fe-4S] cluster site is built by Cys-265, Cys-268, Cys-276, and Cys-279. Short sequence motifs (cx2C motif) lie at residues 265–268 and 276–279; these read CGSC and CSGC. The fe-S binding site B stretch occupies residues 265–279; sequence CGSCYLGDAFRCSGC.

The protein belongs to the anamorsin family. In terms of assembly, monomer. Interacts with TAH18. Interacts with MIA40. It depends on [2Fe-2S] cluster as a cofactor. The cofactor is [4Fe-4S] cluster.

Its subcellular location is the cytoplasm. It is found in the mitochondrion intermembrane space. Component of the cytosolic iron-sulfur (Fe-S) protein assembly (CIA) machinery required for the maturation of extramitochondrial Fe-S proteins. Part of an electron transfer chain functioning in an early step of cytosolic Fe-S biogenesis, facilitating the de novo assembly of a [4Fe-4S] cluster on the scaffold complex CFD1-NBP35. Electrons are transferred to DRE2 from NADPH via the FAD- and FMN-containing protein TAH18. TAH18-DRE2 are also required for the assembly of the diferric tyrosyl radical cofactor of ribonucleotide reductase (RNR), probably by providing electrons for reduction during radical cofactor maturation in the catalytic small subunit RNR2. The chain is Fe-S cluster assembly protein dre2 from Schizosaccharomyces japonicus (strain yFS275 / FY16936) (Fission yeast).